A 94-amino-acid chain; its full sequence is Protein S100-A1 (94 aa).

EF-hand domains lie at 13–48 (INVF…FLDV) and 50–85 (KDAD…LTVA). 7 residues coordinate Ca(2+): Lys28, Glu33, Asp63, Asn65, Asp67, Glu69, and Glu74. Cys86 is subject to S-nitrosocysteine.

It belongs to the S-100 family. Dimer of either two alpha chains, or two beta chains, or one alpha and one beta chain. Also forms heterodimers with S100P. Interacts with AGER. Interacts with CAPZA1. Interacts with FKBP4. Interacts with RYR1 and RYR2. Interacts with CACYBP in a calcium-dependent manner. Interacts with PPP5C (via TPR repeats); the interaction is calcium-dependent and modulates PPP5C activity. Interacts with ATP2A2 and PLN in a Ca(2+)-dependent manner. Interacts with mitochondrial F1-ATPase subunits ATP5F1A and ATP5F1B; these interactions increase F1-ATPase activity. Glutathionylated; glutathionylation increases affinity to calcium about 10-fold. In terms of tissue distribution, expressed in the cardiac and the skeletal muscles.

It is found in the cytoplasm. The protein resides in the sarcoplasmic reticulum. It localises to the mitochondrion. Small calcium binding protein that plays important roles in several biological processes such as Ca(2+) homeostasis, chondrocyte biology and cardiomyocyte regulation. In response to an increase in intracellular Ca(2+) levels, binds calcium which triggers conformational changes. These changes allow interactions with specific target proteins and modulate their activity. Regulates a network in cardiomyocytes controlling sarcoplasmic reticulum Ca(2+) cycling and mitochondrial function through interaction with the ryanodine receptors RYR1 and RYR2, sarcoplasmic reticulum Ca(2+)-ATPase/ATP2A2 and mitochondrial F1-ATPase. Facilitates diastolic Ca(2+) dissociation and myofilament mechanics in order to improve relaxation during diastole. This is Protein S100-A1 (S100a1) from Mus musculus (Mouse).